Reading from the N-terminus, the 831-residue chain is Glycerol-3-phosphate acyltransferase (831 aa).

An HXXXXD motif motif is present at residues 304 to 309 (CHRSHM). The tract at residues 801 to 831 (VSMPAETSNQPEAPETPETPETPEPEGKTES) is disordered.

It belongs to the GPAT/DAPAT family.

The protein localises to the cell inner membrane. The catalysed reaction is sn-glycerol 3-phosphate + an acyl-CoA = a 1-acyl-sn-glycero-3-phosphate + CoA. Its pathway is phospholipid metabolism; CDP-diacylglycerol biosynthesis; CDP-diacylglycerol from sn-glycerol 3-phosphate: step 1/3. This Yersinia pseudotuberculosis serotype IB (strain PB1/+) protein is Glycerol-3-phosphate acyltransferase.